Consider the following 330-residue polypeptide: MTKIMFFGTRAYEKDMALRWGKKNNIDVTTSTELLSVDTVDQLKDYDGVTTMQFGKLEPEVYPKLESYGIKQIAQRTAGFDMYDLELAKKHEIIISNIPSYSPETIAEYSVSIALQLVRKFPTIEKRVQAHNFTWASPIMSRPVKNMTVAIIGTGRIGAATGKIYAGFGARVVGYDAYPNHSLSFLEYKETVEDAIKDADIISLHVPANKDSFHLFDNNMFKNVKKGAVLVNAARGAVINTPDLIEAVNNGTLSGAAIDTYENEANYFTFDCSNQTIDDPILLDLIRNENILVTPHIAFFSDEAVQNLVEGGLNAALSVINTGTCDTRLN.

NAD(+)-binding positions include 156–157 (RI), D176, 206–207 (VP), 233–235 (AAR), and D259. R235 is a catalytic residue. E264 is an active-site residue. Residue H296 is the Proton donor of the active site.

It belongs to the D-isomer specific 2-hydroxyacid dehydrogenase family.

It carries out the reaction (R)-lactate + NAD(+) = pyruvate + NADH + H(+). The protein is D-lactate dehydrogenase (ldhD) of Staphylococcus epidermidis (strain ATCC 35984 / DSM 28319 / BCRC 17069 / CCUG 31568 / BM 3577 / RP62A).